The chain runs to 521 residues: Probable protein kinase UbiB (521 aa).

One can recognise a Protein kinase domain in the interval glutamine 119–threonine 497. ATP contacts are provided by residues isoleucine 125–valine 133 and lysine 151. Catalysis depends on aspartate 286, which acts as the Proton acceptor. Residues glutamine 496–valine 516 traverse the membrane as a helical segment.

The protein belongs to the ABC1 family. UbiB subfamily.

Its subcellular location is the cell inner membrane. Its pathway is cofactor biosynthesis; ubiquinone biosynthesis [regulation]. In terms of biological role, is probably a protein kinase regulator of UbiI activity which is involved in aerobic coenzyme Q (ubiquinone) biosynthesis. This is Probable protein kinase UbiB from Variovorax paradoxus (strain S110).